The following is a 456-amino-acid chain: Bifunctional protein GlmU (456 aa).

Residues 1–231 (MERTCLAIIL…EEELTGCNTR (231 aa)) form a pyrophosphorylase region. Residues 10 to 13 (LAAG), Lys24, Gln77, and 82 to 83 (GT) contribute to the UDP-N-acetyl-alpha-D-glucosamine site. Residue Asp107 participates in Mg(2+) binding. UDP-N-acetyl-alpha-D-glucosamine-binding residues include Gly143, Glu157, Asn172, and Asn229. Residue Asn229 coordinates Mg(2+). The segment at 232-252 (AELAYIERLWQQRRRQELMLA) is linker. Positions 253–456 (GVSMVAPETV…AARKKVKAAE (204 aa)) are N-acetyltransferase. Residues Arg318 and Lys336 each coordinate UDP-N-acetyl-alpha-D-glucosamine. The Proton acceptor role is filled by His348. Tyr351 and Asn362 together coordinate UDP-N-acetyl-alpha-D-glucosamine. Residues Ala365, 371–372 (NY), Ser390, Ser408, and Arg425 contribute to the acetyl-CoA site.

This sequence in the N-terminal section; belongs to the N-acetylglucosamine-1-phosphate uridyltransferase family. It in the C-terminal section; belongs to the transferase hexapeptide repeat family. Homotrimer. Mg(2+) serves as cofactor.

The protein resides in the cytoplasm. It catalyses the reaction alpha-D-glucosamine 1-phosphate + acetyl-CoA = N-acetyl-alpha-D-glucosamine 1-phosphate + CoA + H(+). It carries out the reaction N-acetyl-alpha-D-glucosamine 1-phosphate + UTP + H(+) = UDP-N-acetyl-alpha-D-glucosamine + diphosphate. The protein operates within nucleotide-sugar biosynthesis; UDP-N-acetyl-alpha-D-glucosamine biosynthesis; N-acetyl-alpha-D-glucosamine 1-phosphate from alpha-D-glucosamine 6-phosphate (route II): step 2/2. It functions in the pathway nucleotide-sugar biosynthesis; UDP-N-acetyl-alpha-D-glucosamine biosynthesis; UDP-N-acetyl-alpha-D-glucosamine from N-acetyl-alpha-D-glucosamine 1-phosphate: step 1/1. Its pathway is bacterial outer membrane biogenesis; LPS lipid A biosynthesis. In terms of biological role, catalyzes the last two sequential reactions in the de novo biosynthetic pathway for UDP-N-acetylglucosamine (UDP-GlcNAc). The C-terminal domain catalyzes the transfer of acetyl group from acetyl coenzyme A to glucosamine-1-phosphate (GlcN-1-P) to produce N-acetylglucosamine-1-phosphate (GlcNAc-1-P), which is converted into UDP-GlcNAc by the transfer of uridine 5-monophosphate (from uridine 5-triphosphate), a reaction catalyzed by the N-terminal domain. The chain is Bifunctional protein GlmU from Sinorhizobium fredii (strain NBRC 101917 / NGR234).